Reading from the N-terminus, the 672-residue chain is DNA ligase (672 aa).

NAD(+) is bound by residues 37 to 41 (DAEYD), 86 to 87 (SL), and Glu115. Lys117 acts as the N6-AMP-lysine intermediate in catalysis. NAD(+)-binding residues include Arg138, Glu172, Lys288, and Lys312. Zn(2+) contacts are provided by Cys406, Cys409, Cys424, and Cys429. The BRCT domain maps to 590–672 (DISSTFAGKT…LQEIQQSKQV (83 aa)).

It belongs to the NAD-dependent DNA ligase family. LigA subfamily. The cofactor is Mg(2+). It depends on Mn(2+) as a cofactor.

The enzyme catalyses NAD(+) + (deoxyribonucleotide)n-3'-hydroxyl + 5'-phospho-(deoxyribonucleotide)m = (deoxyribonucleotide)n+m + AMP + beta-nicotinamide D-nucleotide.. Its function is as follows. DNA ligase that catalyzes the formation of phosphodiester linkages between 5'-phosphoryl and 3'-hydroxyl groups in double-stranded DNA using NAD as a coenzyme and as the energy source for the reaction. It is essential for DNA replication and repair of damaged DNA. The polypeptide is DNA ligase (Anoxybacillus flavithermus (strain DSM 21510 / WK1)).